We begin with the raw amino-acid sequence, 1330 residues long: Nephrocystin-3 (1330 aa).

Residue glycine 2 is the site of N-myristoyl glycine attachment. A coiled-coil region spans residues 83–207; that stretch reads ELEYAAAEYE…QRLQAQGIQV (125 aa). 11 TPR repeats span residues 471 to 504, 885 to 918, 920 to 942, 943 to 976, 985 to 1018, 1027 to 1060, 1093 to 1126, 1135 to 1168, 1177 to 1210, 1219 to 1252, and 1261 to 1294; these read IPEEDDFGDVLWDIHDEQEQMETFQQASNSAHEL, CLLNLFVSQNLYKRGHFAELLSYWQFVGKDKSAM, TEYFDSLKQYEKNCEGEDNMSCL, ADLYETLGRFLKDLGLLSQAIVPLQRSLEIRETA, AQSLHQLASVYVQWKKFGNAEQLYKQALEISENA, ARELEALATLYQKQNKYEQAEHFRKKSFKIHQKA, ARTLNELGVLYYLQNNLETADQFLKRSLEMRERV, AQSLNNLAALCNEKKQYDKAEELYERALDIRRRA, AYTVKHLAILYKKMGKLDKAVPLYELAVEIRQKS, ATALVNLAVLYSQMKKHVEALPLYERALKIYEDS, and GETLKNLAVLSYEGGDFEKAAELYKRAMEIKEAE. The segment at 1296–1330 is disordered; the sequence is SLLGGKAPSRHSSSGDTFSLKTAHSPNVFLQQGQR. The segment covering 1305 to 1330 has biased composition (polar residues); sequence RHSSSGDTFSLKTAHSPNVFLQQGQR.

Interacts with NPHP1 and INVS/NPHP2. Interacts (when myristoylated) with UNC119 and UNC119B; interaction is required for localization to cilium. Interacts with CEP164. Component of a complex containing at least ANKS6, INVS, NEK8 and NPHP3. ANKS6 may organize complex assembly by linking INVS and NPHP3 to NEK8 and INVS may target the complex to the proximal ciliary axoneme. Widely expressed at low level. Expressed in heart, placenta, liver, skeletal muscle, kidney and pancreas. Expressed at very low level in brain and lung.

The protein resides in the cell projection. It localises to the cilium. Its function is as follows. Required for normal ciliary development and function. Inhibits disheveled-1-induced canonical Wnt-signaling activity and may also play a role in the control of non-canonical Wnt signaling which regulates planar cell polarity. Probably acts as a molecular switch between different Wnt signaling pathways. Required for proper convergent extension cell movements. This is Nephrocystin-3 (NPHP3) from Homo sapiens (Human).